Consider the following 359-residue polypeptide: Probable dual-specificity RNA methyltransferase RlmN (359 aa).

Catalysis depends on glutamate 91, which acts as the Proton acceptor. The region spanning 97 to 329 (QHYGHSVCVT…KKNGVNCVVR (233 aa)) is the Radical SAM core domain. Cysteine 104 and cysteine 340 are disulfide-bonded. [4Fe-4S] cluster contacts are provided by cysteine 111, cysteine 115, and cysteine 118. Residues 163 to 164 (GE), serine 195, 218 to 220 (SLH), and asparagine 296 each bind S-adenosyl-L-methionine. Cysteine 340 acts as the S-methylcysteine intermediate in catalysis.

It belongs to the radical SAM superfamily. RlmN family. [4Fe-4S] cluster serves as cofactor.

The protein localises to the cytoplasm. The catalysed reaction is adenosine(2503) in 23S rRNA + 2 reduced [2Fe-2S]-[ferredoxin] + 2 S-adenosyl-L-methionine = 2-methyladenosine(2503) in 23S rRNA + 5'-deoxyadenosine + L-methionine + 2 oxidized [2Fe-2S]-[ferredoxin] + S-adenosyl-L-homocysteine. It catalyses the reaction adenosine(37) in tRNA + 2 reduced [2Fe-2S]-[ferredoxin] + 2 S-adenosyl-L-methionine = 2-methyladenosine(37) in tRNA + 5'-deoxyadenosine + L-methionine + 2 oxidized [2Fe-2S]-[ferredoxin] + S-adenosyl-L-homocysteine. Its function is as follows. Specifically methylates position 2 of adenine 2503 in 23S rRNA and position 2 of adenine 37 in tRNAs. The protein is Probable dual-specificity RNA methyltransferase RlmN of Streptococcus pyogenes serotype M2 (strain MGAS10270).